Here is a 156-residue protein sequence, read N- to C-terminus: 3-hydroxyacyl-[acyl-carrier-protein] dehydratase FabZ (156 aa).

H57 is an active-site residue.

The protein belongs to the thioester dehydratase family. FabZ subfamily.

Its subcellular location is the cytoplasm. The enzyme catalyses a (3R)-hydroxyacyl-[ACP] = a (2E)-enoyl-[ACP] + H2O. In terms of biological role, involved in unsaturated fatty acids biosynthesis. Catalyzes the dehydration of short chain beta-hydroxyacyl-ACPs and long chain saturated and unsaturated beta-hydroxyacyl-ACPs. The sequence is that of 3-hydroxyacyl-[acyl-carrier-protein] dehydratase FabZ from Anaeromyxobacter dehalogenans (strain 2CP-C).